The sequence spans 80 residues: ATP synthase subunit c (80 aa).

2 consecutive transmembrane segments (helical) span residues 11–31 and 54–74; these read IAAT…IGIL and FIVM…GLYI.

Belongs to the ATPase C chain family. As to quaternary structure, F-type ATPases have 2 components, F(1) - the catalytic core - and F(0) - the membrane proton channel. F(1) has five subunits: alpha(3), beta(3), gamma(1), delta(1), epsilon(1). F(0) has three main subunits: a(1), b(2) and c(10-14). The alpha and beta chains form an alternating ring which encloses part of the gamma chain. F(1) is attached to F(0) by a central stalk formed by the gamma and epsilon chains, while a peripheral stalk is formed by the delta and b chains.

It is found in the cell membrane. Functionally, f(1)F(0) ATP synthase produces ATP from ADP in the presence of a proton or sodium gradient. F-type ATPases consist of two structural domains, F(1) containing the extramembraneous catalytic core and F(0) containing the membrane proton channel, linked together by a central stalk and a peripheral stalk. During catalysis, ATP synthesis in the catalytic domain of F(1) is coupled via a rotary mechanism of the central stalk subunits to proton translocation. Key component of the F(0) channel; it plays a direct role in translocation across the membrane. A homomeric c-ring of between 10-14 subunits forms the central stalk rotor element with the F(1) delta and epsilon subunits. This Baumannia cicadellinicola subsp. Homalodisca coagulata protein is ATP synthase subunit c.